The primary structure comprises 117 residues: Immunoglobulin heavy variable 1-84 (117 aa).

The N-terminal stretch at 1–19 (MGWSWIFLFLLSGTAGVHC) is a signal peptide. The interval 20–49 (QIQLQQSGPELVKPGASVKISCKASGYTFT) is framework-1. Residues 31 to 117 (VKPGASVKIS…EDSAVYFCAR (87 aa)) enclose the Ig-like domain. The cysteines at positions 41 and 115 are disulfide-linked. The segment at 50-54 (DYYIN) is complementarity-determining-1. The framework-2 stretch occupies residues 55 to 68 (WVKQRPGQGLEWIG). The tract at residues 69-85 (WIYPGSGNTKYNEKFKG) is complementarity-determining-2. The interval 86 to 117 (KATLTVDTSSSTAYMQLSSLTSEDSAVYFCAR) is framework-3.

The chain is Immunoglobulin heavy variable 1-84 from Mus musculus (Mouse).